Here is a 1299-residue protein sequence, read N- to C-terminus: DNA-directed RNA polymerase subunit beta' (1299 aa).

Cysteine 60, cysteine 62, cysteine 75, and cysteine 78 together coordinate Zn(2+). A disordered region spans residues 188–209 (GAKSDQKRRAKDGAEKEMGQTR). Mg(2+) is bound by residues aspartate 535, aspartate 537, and aspartate 539. Cysteine 882, cysteine 959, cysteine 966, and cysteine 969 together coordinate Zn(2+).

Belongs to the RNA polymerase beta' chain family. In terms of assembly, the RNAP catalytic core consists of 2 alpha, 1 beta, 1 beta' and 1 omega subunit. When a sigma factor is associated with the core the holoenzyme is formed, which can initiate transcription. Mg(2+) is required as a cofactor. Zn(2+) serves as cofactor.

It catalyses the reaction RNA(n) + a ribonucleoside 5'-triphosphate = RNA(n+1) + diphosphate. Functionally, DNA-dependent RNA polymerase catalyzes the transcription of DNA into RNA using the four ribonucleoside triphosphates as substrates. The polypeptide is DNA-directed RNA polymerase subunit beta' (Clavibacter sepedonicus (Clavibacter michiganensis subsp. sepedonicus)).